Reading from the N-terminus, the 449-residue chain is Probable aminotransferase TAT1 (449 aa).

Polar residues predominate over residues 1 to 12; the sequence is MNHNSNLVLPSH. The disordered stretch occupies residues 1 to 20; the sequence is MNHNSNLVLPSHQTETQTQD.

It belongs to the class-I pyridoxal-phosphate-dependent aminotransferase family. Pyridoxal 5'-phosphate serves as cofactor.

The sequence is that of Probable aminotransferase TAT1 from Arabidopsis thaliana (Mouse-ear cress).